The primary structure comprises 1035 residues: Unconventional myosin IC (1035 aa).

A Myosin motor domain is found at 21 to 703 (GVQDFVLLEN…TLFDTEDAYQ (683 aa)). Position 114–121 (114–121 (GESGSGKT)) interacts with ATP. Phosphoserine is present on Ser304. Thr310 bears the Phosphothreonine mark. Residues 578–600 (LNNLMDILMCKEPSYIRCIKPND) are actin-binding. 3 IQ domains span residues 696 to 728 (FDTE…KYLK), 729 to 751 (LRAQ…AAKK), and 752 to 779 (RREA…FNEE). The TH1 domain occupies 857-1035 (KNNYASSVST…KGHLVIIGTQ (179 aa)).

This sequence belongs to the TRAFAC class myosin-kinesin ATPase superfamily. Myosin family. Binds F-actin. In terms of tissue distribution, in the embryo, expressed in gastric caeca, midgut cells of the proventriculus, and in the mid and hindgut. In the larval and adult gut brush border, expressed in the microvilli. Also expressed at high levels in follicle cells during oogenesis.

The protein localises to the cytoplasm. The protein resides in the cell cortex. It is found in the cell membrane. Unconventional myosin that functions as actin-based motor protein with ATPase activity. Binds to membranes enriched in phosphatidylinositol 4-5-bisphosphate, and can glide along actin filaments when anchored to a lipid bilayer. Functions as antagonist for Myo31DF, an unconventional myosin with an essential role in the establishment of body left-right asymmetry. The protein is Unconventional myosin IC (Myo61F) of Drosophila melanogaster (Fruit fly).